We begin with the raw amino-acid sequence, 534 residues long: Probable alpha-galactosidase A (534 aa).

The signal sequence occupies residues 1–25; the sequence is MRLITRWIPLANALASTMPVQVVAS. A disulfide bond links cysteine 47 and cysteine 79. N-linked (GlcNAc...) asparagine glycans are attached at residues asparagine 50, asparagine 88, asparagine 94, and asparagine 124. Residues cysteine 127 and cysteine 157 are joined by a disulfide bond. The Nucleophile role is filled by aspartate 155. Asparagine 204 carries an N-linked (GlcNAc...) asparagine glycan. The active-site Proton donor is aspartate 213. One can recognise a Ricin B-type lectin domain in the interval 413-534; that stretch reads CSQVIPTGLI…GLPAGVHVAL (122 aa). A disulfide bond links cysteine 430 and cysteine 443. Asparagine 444 carries N-linked (GlcNAc...) asparagine glycosylation. A disulfide bond links cysteine 468 and cysteine 481.

The protein belongs to the glycosyl hydrolase 27 family.

The protein localises to the secreted. It catalyses the reaction Hydrolysis of terminal, non-reducing alpha-D-galactose residues in alpha-D-galactosides, including galactose oligosaccharides, galactomannans and galactolipids.. Hydrolyzes a variety of simple alpha-D-galactoside as well as more complex molecules such as oligosaccharides and polysaccharides. The protein is Probable alpha-galactosidase A (aglA) of Aspergillus flavus (strain ATCC 200026 / FGSC A1120 / IAM 13836 / NRRL 3357 / JCM 12722 / SRRC 167).